We begin with the raw amino-acid sequence, 222 residues long: von Willebrand factor C domain-containing protein 2-like (222 aa).

Positions 1-21 (MALHIHEACILLLVIPGLVTS) are cleaved as a signal peptide. VWFC domains follow at residues 51-110 (KGCV…PECK) and 114-172 (NFCE…PVCK).

As to quaternary structure, peripherally associated with AMPAR complex. AMPAR complex consists of an inner core made of 4 pore-forming GluA/GRIA proteins (GRIA1, GRIA2, GRIA3 and GRIA4) and 4 major auxiliary subunits arranged in a twofold symmetry. One of the two pairs of distinct binding sites is occupied either by CNIH2, CNIH3 or CACNG2, CACNG3. The other harbors CACNG2, CACNG3, CACNG4, CACNG8 or GSG1L. This inner core of AMPAR complex is complemented by outer core constituents binding directly to the GluA/GRIA proteins at sites distinct from the interaction sites of the inner core constituents. Outer core constituents include at least PRRT1, PRRT2, CKAMP44/SHISA9, FRRS1L and NRN1. The proteins of the inner and outer core serve as a platform for other, more peripherally associated AMPAR constituents, including VWC2L. Alone or in combination, these auxiliary subunits control the gating and pharmacology of the AMPAR complex and profoundly impact their biogenesis and protein processing. Predominantly expressed in the brain (at protein level). Also detected in bones, including femur and calvaria, heart, lung and kidney. Isoform 5 is predominant in lung and heart, compared to isoforms 1 and 3. Isoform 4 is expressed in femur and calvaria at higher levels than isoforms 1 and 5. Isoforms 1 and 4 are expressed at higher levels than isoform 5 in kidney and brain.

The protein localises to the secreted. Its subcellular location is the synapse. Its function is as follows. May play a role in neurogenesis. May promote matrix mineralization, but has been shown to weakly, but significantly inhibit BMP2 and BMP6 activity in a preosteoblastic cell line. The sequence is that of von Willebrand factor C domain-containing protein 2-like (Vwc2l) from Mus musculus (Mouse).